A 361-amino-acid chain; its full sequence is Anhydro-N-acetylmuramic acid kinase (361 aa).

G10–D17 contacts ATP.

It belongs to the anhydro-N-acetylmuramic acid kinase family.

It catalyses the reaction 1,6-anhydro-N-acetyl-beta-muramate + ATP + H2O = N-acetyl-D-muramate 6-phosphate + ADP + H(+). The protein operates within amino-sugar metabolism; 1,6-anhydro-N-acetylmuramate degradation. It functions in the pathway cell wall biogenesis; peptidoglycan recycling. In terms of biological role, catalyzes the specific phosphorylation of 1,6-anhydro-N-acetylmuramic acid (anhMurNAc) with the simultaneous cleavage of the 1,6-anhydro ring, generating MurNAc-6-P. Is required for the utilization of anhMurNAc either imported from the medium or derived from its own cell wall murein, and thus plays a role in cell wall recycling. The sequence is that of Anhydro-N-acetylmuramic acid kinase from Gluconobacter oxydans (strain 621H) (Gluconobacter suboxydans).